The sequence spans 118 residues: Cell division protein FtsB (118 aa).

Over 1–3 the chain is Cytoplasmic; it reads MRL. A helical membrane pass occupies residues 4–21; that stretch reads LFLVLLVLLGLIQYPLWL. The Periplasmic portion of the chain corresponds to 22 to 118; sequence GKGGWFKVWD…PRPPATPPRR (97 aa). Residues 28–62 adopt a coiled-coil conformation; it reads KVWDLQRQVAEQRETNDGLRARNTALEAEVRDLAT. The tract at residues 88–118 is disordered; that stretch reads LPPGTPLPSGNSTPQASALSKPRPPATPPRR. Positions 95-105 are enriched in polar residues; that stretch reads PSGNSTPQASA. Residues 109–118 show a composition bias toward pro residues; the sequence is PRPPATPPRR.

Belongs to the FtsB family. Part of a complex composed of FtsB, FtsL and FtsQ.

The protein resides in the cell inner membrane. Essential cell division protein. May link together the upstream cell division proteins, which are predominantly cytoplasmic, with the downstream cell division proteins, which are predominantly periplasmic. This is Cell division protein FtsB from Bordetella parapertussis (strain 12822 / ATCC BAA-587 / NCTC 13253).